The chain runs to 372 residues: Cyclin-J (372 aa).

In terms of domain architecture, Cyclin N-terminal spans 15-143; it reads DIHQALRYKE…LLETFQWNLC (129 aa).

It belongs to the cyclin family.

The sequence is that of Cyclin-J (CCNJ) from Homo sapiens (Human).